Here is a 130-residue protein sequence, read N- to C-terminus: Small ribosomal subunit protein uS9 (130 aa).

The protein belongs to the universal ribosomal protein uS9 family.

The chain is Small ribosomal subunit protein uS9 from Haemophilus influenzae (strain 86-028NP).